Consider the following 119-residue polypeptide: Large ribosomal subunit protein bL20 (119 aa).

Belongs to the bacterial ribosomal protein bL20 family.

In terms of biological role, binds directly to 23S ribosomal RNA and is necessary for the in vitro assembly process of the 50S ribosomal subunit. It is not involved in the protein synthesizing functions of that subunit. This chain is Large ribosomal subunit protein bL20, found in Geobacillus sp. (strain WCH70).